The following is a 441-amino-acid chain: MSTLGQGDFELAVRQQPKYACVAIERKPIDPPPIVQLMVNPRKDPGRTFLQNPYLILTARLIRKGDEDQDEQTGPKESDLTGTLVSSLYSLKDTDNSQGGFFVFGDLSVRRVGTYRLAFILYELRLAEKECWLLSRTVSDPFVVYATKTFPGLAESTFLTRSFSDQGVRLRLRKDSRTVSTKKRTISQADQIRASQGIHGYLPHDANHDLSPNGHSPHHLRRLSSLHDQAQLDRSRSYYSESPQMRPGEYTSSSYGYAPYDDQKPHKRARMDGASPDSPHPSSAGGGGGGYETDTTAYHSYAHHAHHSGPRTVPDALGSIYPLTTSGYAVAPQPALTGLPMPSPYASMPRLDTTHLPPHSPAGAPGSASSAFSPGTIGSSSRRSPPGTAGGYPSYAGHAHAGQAMFTSQPTSLPYHPAVAHGHPGAGGLGIAVGLDLDERH.

The Velvet domain occupies 1–173 (MSTLGQGDFE…SDQGVRLRLR (173 aa)). Disordered regions lie at residues 200 to 220 (GYLP…PHHL), 234 to 295 (RSRS…ETDT), and 341 to 396 (MPSP…PSYA). Composition is skewed to low complexity over residues 272-283 (DGASPDSPHPSS) and 361-375 (PAGA…FSPG).

The protein belongs to the velvet family. VelB subfamily. Component of the heterotrimeric velvet complex composed of laeA, veA and velB; VeA acting as a bridging protein between laeA and velB.

Its subcellular location is the nucleus. The protein resides in the cytoplasm. Functionally, component of the velvet transcription factor complex that controls sexual/asexual developmental ratio in response to light, promoting sexual development in the darkness while stimulating asexual sporulation under illumination. The velvet complex acts as a global regulator for secondary metabolite gene expression and is required for the production of chaetoglobosin A. This Chaetomium globosum (strain ATCC 6205 / CBS 148.51 / DSM 1962 / NBRC 6347 / NRRL 1970) (Soil fungus) protein is Velvet complex subunit B.